The following is a 207-amino-acid chain: Large ribosomal subunit protein bL25 (207 aa).

The segment at 1–20 is disordered; the sequence is MANHQIKAQRRKDEGKGASR.

It belongs to the bacterial ribosomal protein bL25 family. CTC subfamily. In terms of assembly, part of the 50S ribosomal subunit; part of the 5S rRNA/L5/L18/L25 subcomplex. Contacts the 5S rRNA. Binds to the 5S rRNA independently of L5 and L18.

Its function is as follows. This is one of the proteins that binds to the 5S RNA in the ribosome where it forms part of the central protuberance. The polypeptide is Large ribosomal subunit protein bL25 (Xylella fastidiosa (strain M12)).